The following is a 45-amino-acid chain: Iota-conotoxin-like R11.13 (45 aa).

Intrachain disulfides connect C5/C19, C12/C22, C18/C27, and C21/C36. L43 carries the D-leucine modification. R45 is a propeptide (removed by a carboxypeptidase).

The protein belongs to the conotoxin I1 superfamily. As to expression, expressed by the venom duct.

It is found in the secreted. In terms of biological role, iota-conotoxins bind to voltage-gated sodium channels (Nav) and act as agonists by shifting the voltage-dependence of activation to more hyperpolarized levels. Produces general excitatory symptoms. This chain is Iota-conotoxin-like R11.13, found in Conus radiatus (Rayed cone).